The sequence spans 435 residues: Serine--tRNA ligase (435 aa).

240-242 is a binding site for L-serine; the sequence is TAE. An ATP-binding site is contributed by 271–273; that stretch reads RSE. An L-serine-binding site is contributed by E294. 358–361 contacts ATP; it reads EISS. Position 393 (S393) interacts with L-serine.

Belongs to the class-II aminoacyl-tRNA synthetase family. Type-1 seryl-tRNA synthetase subfamily. In terms of assembly, homodimer. The tRNA molecule binds across the dimer.

It is found in the cytoplasm. The enzyme catalyses tRNA(Ser) + L-serine + ATP = L-seryl-tRNA(Ser) + AMP + diphosphate + H(+). The catalysed reaction is tRNA(Sec) + L-serine + ATP = L-seryl-tRNA(Sec) + AMP + diphosphate + H(+). The protein operates within aminoacyl-tRNA biosynthesis; selenocysteinyl-tRNA(Sec) biosynthesis; L-seryl-tRNA(Sec) from L-serine and tRNA(Sec): step 1/1. Its function is as follows. Catalyzes the attachment of serine to tRNA(Ser). Is also able to aminoacylate tRNA(Sec) with serine, to form the misacylated tRNA L-seryl-tRNA(Sec), which will be further converted into selenocysteinyl-tRNA(Sec). In Cupriavidus metallidurans (strain ATCC 43123 / DSM 2839 / NBRC 102507 / CH34) (Ralstonia metallidurans), this protein is Serine--tRNA ligase.